The sequence spans 199 residues: Ras-related protein Rab-7b (199 aa).

Residues 15 to 22 (GALGVGKT), 34 to 40 (FEEYQTT), 63 to 67 (DTGGQ), 124 to 127 (NKID), and 154 to 155 (AK) each bind GTP. 2 consecutive short sequence motifs (switch) follow at residues 28-41 (YVHKTFFEEYQTTL) and 67-82 (QERFRSMVSTFYKGSD). Position 186 is a phosphoserine (Ser-186). S-geranylgeranyl cysteine attachment occurs at residues Cys-198 and Cys-199.

Belongs to the small GTPase superfamily. Rab family.

It localises to the late endosome. It is found in the lysosome. The protein resides in the golgi apparatus. The protein localises to the trans-Golgi network. Its subcellular location is the cytoplasmic vesicle. It localises to the phagosome. It is found in the phagosome membrane. Functionally, controls vesicular trafficking from endosomes to the trans-Golgi network (TGN). Acts as a negative regulator of TLR9 signaling and can suppress TLR9-triggered TNFA, IL6, and IFNB production in macrophages by promoting TLR9 lysosomal degradation. Also negatively regulates TLR4 signaling in macrophages by promoting lysosomal degradation of TLR4. Promotes megakaryocytic differentiation by increasing NF-kappa-B-dependent IL6 production and subsequently enhancing the association of STAT3 with GATA1. Not involved in the regulation of the EGF- and EGFR degradation pathway. The polypeptide is Ras-related protein Rab-7b (Rab7b) (Mus musculus (Mouse)).